The following is a 71-amino-acid chain: Mitotic-spindle organizing protein 1 (71 aa).

The protein belongs to the MOZART1 family. Part of the gamma-tubulin complex.

Its subcellular location is the cytoplasm. The protein resides in the cytoskeleton. It is found in the microtubule organizing center. It localises to the spindle pole body. Required for gamma-tubulin complex recruitment to the microtubule organizing center (MTOC). This is Mitotic-spindle organizing protein 1 from Aspergillus clavatus (strain ATCC 1007 / CBS 513.65 / DSM 816 / NCTC 3887 / NRRL 1 / QM 1276 / 107).